We begin with the raw amino-acid sequence, 163 residues long: Endoribonuclease YbeY (163 aa).

3 residues coordinate Zn(2+): histidine 119, histidine 123, and histidine 129.

Belongs to the endoribonuclease YbeY family. Requires Zn(2+) as cofactor.

The protein resides in the cytoplasm. Functionally, single strand-specific metallo-endoribonuclease involved in late-stage 70S ribosome quality control and in maturation of the 3' terminus of the 16S rRNA. The protein is Endoribonuclease YbeY of Actinobacillus pleuropneumoniae serotype 5b (strain L20).